Consider the following 548-residue polypeptide: ATP synthase subunit alpha (548 aa).

Residue 172–179 (GDRKTGKT) participates in ATP binding. Positions 526–548 (AEAMDEADVEKESVKVRKPAPKK) are disordered.

This sequence belongs to the ATPase alpha/beta chains family. As to quaternary structure, F-type ATPases have 2 components, CF(1) - the catalytic core - and CF(0) - the membrane proton channel. CF(1) has five subunits: alpha(3), beta(3), gamma(1), delta(1), epsilon(1). CF(0) has three main subunits: a(1), b(2) and c(9-12). The alpha and beta chains form an alternating ring which encloses part of the gamma chain. CF(1) is attached to CF(0) by a central stalk formed by the gamma and epsilon chains, while a peripheral stalk is formed by the delta and b chains.

It is found in the cell membrane. It carries out the reaction ATP + H2O + 4 H(+)(in) = ADP + phosphate + 5 H(+)(out). In terms of biological role, produces ATP from ADP in the presence of a proton gradient across the membrane. The alpha chain is a regulatory subunit. This is ATP synthase subunit alpha from Mycolicibacterium gilvum (strain PYR-GCK) (Mycobacterium gilvum (strain PYR-GCK)).